A 251-amino-acid chain; its full sequence is Imidazole glycerol phosphate synthase subunit HisF (251 aa).

Active-site residues include aspartate 11 and aspartate 130.

It belongs to the HisA/HisF family. Heterodimer of HisH and HisF.

The protein resides in the cytoplasm. It carries out the reaction 5-[(5-phospho-1-deoxy-D-ribulos-1-ylimino)methylamino]-1-(5-phospho-beta-D-ribosyl)imidazole-4-carboxamide + L-glutamine = D-erythro-1-(imidazol-4-yl)glycerol 3-phosphate + 5-amino-1-(5-phospho-beta-D-ribosyl)imidazole-4-carboxamide + L-glutamate + H(+). It participates in amino-acid biosynthesis; L-histidine biosynthesis; L-histidine from 5-phospho-alpha-D-ribose 1-diphosphate: step 5/9. IGPS catalyzes the conversion of PRFAR and glutamine to IGP, AICAR and glutamate. The HisF subunit catalyzes the cyclization activity that produces IGP and AICAR from PRFAR using the ammonia provided by the HisH subunit. The sequence is that of Imidazole glycerol phosphate synthase subunit HisF from Chlorobaculum parvum (strain DSM 263 / NCIMB 8327) (Chlorobium vibrioforme subsp. thiosulfatophilum).